A 506-amino-acid polypeptide reads, in one-letter code: MDHREKSDRRLLLWFFAVATAVKLLLIPSSRSTDFEVHRNWLAITNSLPLTKWYFDETSQWTLDYPPFFAYFERFLSIFARLVDPRIVDLQSGLDYNAESVIYFQRISVIVSDLCLLYGVYRLTRKLEPLKRNLICALVIWSPGLLIVDHIHFQYNGFLLGWLLLSISFLQEGRDLLGGFLFAVLLCFKHLFAVTAPVYFVYLLRHYCWSGLVTGFRRLVTIGAVVVAVFAAAYGPFIYHGQIQQVISRMFPFGRGLCHAYWAPNFWVFYIILDKGLAVLLRKLGYEIQIPSASFTGGLVGDSSPFAVLPQITPLTTFAMVLLAISPCLIKAWKKPHSGLVARWVAYAYTCGFLFGWHVHEKASLHFTIPLAIVAVQSLEDAKHYFLVSIVSCYSLYPLLYEPQEYPIKVLLLLLHSVVMWLGFAAQYTDYKAQKKETSEIKSKFRIGCFEKSYLMGLIIVEIVSQFLHPYFLGDKLPFLPLMLISTYCTVGIMYSWIWQLRKILT.

The next 12 helical transmembrane spans lie at 10-30 (RLLL…IPSS), 101-121 (VIYF…YGVY), 133-153 (NLIC…HIHF), 176-196 (LLGG…AVTA), 219-239 (LVTI…PFIY), 261-281 (YWAP…AVLL), 305-325 (PFAV…LLAI), 339-359 (GLVA…GWHV), 384-401 (HYFL…PLLY), 406-426 (YPIK…GFAA), 454-474 (YLMG…YFLG), and 479-499 (FLPL…SWIW).

It belongs to the ALG6/ALG8 glucosyltransferase family.

It is found in the endoplasmic reticulum membrane. It catalyses the reaction an alpha-D-Glc-(1-&gt;3)-alpha-D-Man-(1-&gt;2)-alpha-D-Man-(1-&gt;2)-alpha-D-Man-(1-&gt;3)-[alpha-D-Man-(1-&gt;2)-alpha-D-Man-(1-&gt;3)-[alpha-D-Man-(1-&gt;2)-alpha-D-Man-(1-&gt;6)]-alpha-D-Man-(1-&gt;6)]-beta-D-Man-(1-&gt;4)-beta-D-GlcNAc-(1-&gt;4)-alpha-D-GlcNAc-diphospho-di-trans,poly-cis-dolichol + a di-trans,poly-cis-dolichyl beta-D-glucosyl phosphate = an alpha-D-Glc-(1-&gt;3)-alpha-D-Glc-(1-&gt;3)-alpha-D-Man-(1-&gt;2)-alpha-D-Man-(1-&gt;2)-alpha-D-Man-(1-&gt;3)-[alpha-D-Man-(1-&gt;2)-alpha-D-Man-(1-&gt;3)-[alpha-D-Man-(1-&gt;2)-alpha-D-Man-(1-&gt;6)]-alpha-D-Man-(1-&gt;6)]-beta-D-Man-(1-&gt;4)-beta-D-GlcNAc-(1-&gt;4)-alpha-D-GlcNAc-diphospho-di-trans,poly-cis-dolichol + a di-trans,poly-cis-dolichyl phosphate + H(+). It functions in the pathway protein modification; protein glycosylation. Dolichyl pyrophosphate Glc1Man9GlcNAc2 alpha-1,3-glucosyltransferase that operates in the biosynthetic pathway of dolichol-linked oligosaccharides, the glycan precursors employed in protein asparagine (N)-glycosylation. The assembly of dolichol-linked oligosaccharides begins on the cytosolic side of the endoplasmic reticulum membrane and finishes in its lumen. The sequential addition of sugars to dolichol pyrophosphate produces dolichol-linked oligosaccharides containing fourteen sugars, including two GlcNAcs, nine mannoses and three glucoses. Once assembled, the oligosaccharide is transferred from the lipid to nascent proteins by oligosaccharyltransferases. In the lumen of the endoplasmic reticulum, adds the second glucose residue from dolichyl phosphate glucose (Dol-P-Glc) onto the lipid-linked oligosaccharide intermediate Glc(1)Man(9)GlcNAc(2)-PP-Dol to produce Glc(2)Man(9)GlcNAc(2)-PP-Dol. In Arabidopsis thaliana (Mouse-ear cress), this protein is Dolichyl pyrophosphate Glc1Man9GlcNAc2 alpha-1,3-glucosyltransferase.